Here is a 523-residue protein sequence, read N- to C-terminus: Leucine-rich repeat transmembrane neuronal protein 1 (523 aa).

The first 34 residues, 1–34 (MDFLLLGLCLHWLLRRPSGVVLCLLGACFQMLPA), serve as a signal peptide directing secretion. Residues 35–63 (APSGCPGQCRCEGRLLYCEALNLTEAPHN) form the LRRNT domain. At 35–428 (APSGCPGQCR…HAENAVQIHK (394 aa)) the chain is on the extracellular side. N-linked (GlcNAc...) asparagine glycans are attached at residues asparagine 56 and asparagine 63. LRR repeat units follow at residues 64-87 (LSGLLGLSLRYNSLSELRAGQFTG), 89-111 (MQLTWLYLDHNHICSVQGDAFQK), 112-135 (LRRVKELTLSSNQITELANTTFRP), 136-159 (MPNLRSVDLSYNKLQALAPDLFHG), 161-183 (RKLTTLHMRANAIQFVPVRIFQD), 184-207 (CRSLKFLDIGYNQLKSLARNSFAG), 209-231 (FKLTELHLEHNDLIKVNFAHFPR), 233-255 (ISLNSLCLRRNKVAIVVSSLDWV), 256-278 (WNLEKMDLSGNEIEYMEPHVFET), and 280-302 (PYLQSLQLDSNRLTYIEPRILNS). Asparagine 130 is a glycosylation site (N-linked (GlcNAc...) asparagine). The region spanning 314-365 (NLWDCGRNVCALASWLSNFQGRYDANLQCASPEYAQGEDVLDAVYAFHLCED) is the LRRCT domain. An N-linked (GlcNAc...) asparagine glycan is attached at asparagine 381. Residues 429–449 (VVTGTMALIFSFLIVVLVLYV) traverse the membrane as a helical segment. The Cytoplasmic segment spans residues 450–523 (SWKCFPASLR…HQQPARECEV (74 aa)). Positions 520–523 (ECEV) match the May be involved in DLG4-binding motif.

The protein belongs to the LRRTM family. As to quaternary structure, interacts with DLG4.

The protein resides in the cell membrane. It is found in the postsynaptic cell membrane. In terms of biological role, exhibits strong synaptogenic activity, restricted to excitatory presynaptic differentiation, acting at both pre- and postsynaptic level. In Rattus norvegicus (Rat), this protein is Leucine-rich repeat transmembrane neuronal protein 1 (Lrrtm1).